The chain runs to 239 residues: Transcriptional regulatory protein BtsR (239 aa).

The Response regulatory domain maps to 3 to 116 (KVLIVDDEPL…RLEKTLHRLR (114 aa)). 4-aspartylphosphate is present on aspartate 54. The HTH LytTR-type domain occupies 137 to 239 (IPCTGHSRIY…LKSLKEAIGL (103 aa)).

Phosphorylated by BtsS.

Its function is as follows. Member of the two-component regulatory system BtsS/BtsR. BtsR regulates expression of btsT by binding to its promoter region. The chain is Transcriptional regulatory protein BtsR from Salmonella typhimurium (strain LT2 / SGSC1412 / ATCC 700720).